The primary structure comprises 191 residues: Ribonuclease MC (191 aa).

Gln9 lines the RNA pocket. Cys15 and Cys23 form a disulfide bridge. RNA is bound by residues His34, 72-73 (NV), Arg75, Phe81, 84-85 (HE), and 88-89 (KH). Catalysis depends on His34, which acts as the Proton donor. Disulfide bonds link Cys48-Cys92, Cys152-Cys185, and Cys169-Cys180. The active site involves Glu85. Catalysis depends on His89, which acts as the Proton acceptor.

Belongs to the RNase T2 family.

It carries out the reaction a ribonucleotidyl-ribonucleotide-RNA + H2O = a 3'-end 3'-phospho-ribonucleotide-RNA + a 5'-end dephospho-ribonucleoside-RNA + H(+). Functionally, ribonuclease cleaving preferentially the 5'-side of uridine. The sequence is that of Ribonuclease MC from Momordica charantia (Bitter gourd).